The primary structure comprises 236 residues: Eukaryotic translation initiation factor 3 subunit J (236 aa).

Residues 1-84 are disordered; that stretch reads MADDWESAAD…RLEEEAEAQR (84 aa). A compositionally biased stretch (acidic residues) spans 28 to 46; sequence GEDEDEDIKDSWEDEEEKK. Basic and acidic residues-rich tracts occupy residues 47–58 and 68–77; these read DEEKPTKTEAPA and AKLEQQARLE.

This sequence belongs to the eIF-3 subunit J family. Component of the eukaryotic translation initiation factor 3 (eIF-3) complex. The eIF-3 complex interacts with pix.

The protein resides in the cytoplasm. Component of the eukaryotic translation initiation factor 3 (eIF-3) complex, which is involved in protein synthesis of a specialized repertoire of mRNAs and, together with other initiation factors, stimulates binding of mRNA and methionyl-tRNAi to the 40S ribosome. The eIF-3 complex specifically targets and initiates translation of a subset of mRNAs involved in cell proliferation. This chain is Eukaryotic translation initiation factor 3 subunit J, found in Drosophila yakuba (Fruit fly).